The following is a 635-amino-acid chain: Biosynthetic arginine decarboxylase (635 aa).

K103 carries the N6-(pyridoxal phosphate)lysine modification. 283–293 is a substrate binding site; that stretch reads FDVGGGLGVDY.

Belongs to the Orn/Lys/Arg decarboxylase class-II family. SpeA subfamily. It depends on Mg(2+) as a cofactor. The cofactor is pyridoxal 5'-phosphate.

It catalyses the reaction L-arginine + H(+) = agmatine + CO2. The protein operates within amine and polyamine biosynthesis; agmatine biosynthesis; agmatine from L-arginine: step 1/1. Its function is as follows. Catalyzes the biosynthesis of agmatine from arginine. The chain is Biosynthetic arginine decarboxylase from Proteus mirabilis (strain HI4320).